The following is a 124-amino-acid chain: Putative iron-sulfur cluster insertion protein ErpA 2 (124 aa).

3 residues coordinate iron-sulfur cluster: cysteine 52, cysteine 116, and cysteine 118.

Belongs to the HesB/IscA family. In terms of assembly, homodimer. Iron-sulfur cluster is required as a cofactor.

Functionally, required for insertion of 4Fe-4S clusters. This Burkholderia vietnamiensis (strain G4 / LMG 22486) (Burkholderia cepacia (strain R1808)) protein is Putative iron-sulfur cluster insertion protein ErpA 2.